A 181-amino-acid polypeptide reads, in one-letter code: Regulator of G-protein signaling 5 (181 aa).

Residues 64–180 (SLDKLLQNNY…VRSEFYQEFI (117 aa)) form the RGS domain.

It localises to the cytoplasm. The protein resides in the membrane. Inhibits signal transduction by increasing the GTPase activity of G protein alpha subunits thereby driving them into their inactive GDP-bound form. Binds to G(i)-alpha and G(o)-alpha, but not to G(s)-alpha. This Bos taurus (Bovine) protein is Regulator of G-protein signaling 5 (RGS5).